The sequence spans 217 residues: MDYQNRAGVRFGGGGVAGYQETNAARRERLRKLALETIDLSKDPYLMKNHLGTFECRLCLTTHANENSYLTHTQGKKHQTNLARRQALENKKSQENAPQVLLGISQSHVQVKKSVVKIGRPGYKVSKIREAESGKFGLRFQIKYPDIEVNAKPRYRIMSAYEQRVEAPDRKFQYLVVAAEPYESIAFKIDRAPGKFWSYWDAPTYTIQFFYNLTKIS.

A Matrin-type zinc finger spans residues 54-84 (FECRLCLTTHANENSYLTHTQGKKHQTNLAR).

This sequence belongs to the SF3A2 family. As to quaternary structure, belongs to the 40S cdc5-associated complex (or cwf complex), a spliceosome sub-complex reminiscent of a late-stage spliceosome composed of the U2, U5 and U6 snRNAs and at least brr2, cdc5, cwf2/prp3, cwf3/syf1, cwf4/syf3, cwf5/ecm2, spp42/cwf6, cwf7/spf27, cwf8, cwf9, cwf10, cwf11, cwf12, prp45/cwf13, cwf14, cwf15, cwf16, cwf17, cwf18, cwf19, cwf20, cwf21, cwf22, cwf23, cwf24, cwf25, cwf26, cyp7/cwf27, cwf28, cwf29/ist3, lea1, msl1, prp5/cwf1, prp10, prp12/sap130, prp17, prp22, sap61, sap62, sap114, sap145, slu7, smb1, smd1, smd3, smf1, smg1 and syf2.

The protein resides in the nucleus. It localises to the cytoplasm. Involved in mRNA splicing where it associates with cdc5 and the other cwf proteins as part of the spliceosome. This chain is Pre-mRNA-splicing factor sap62 (sap62), found in Schizosaccharomyces pombe (strain 972 / ATCC 24843) (Fission yeast).